Reading from the N-terminus, the 389-residue chain is 5-hydroxytryptamine receptor 1B (389 aa).

The segment at 1–27 (MEETNTHCAPPPPAGSQTGVSQANLSS) is disordered. Topologically, residues 1–45 (MEETNTHCAPPPPAGSQTGVSQANLSSAPPNCSTEGYIYQDSIAL) are extracellular. Over residues 15-27 (GSQTGVSQANLSS) the composition is skewed to polar residues. N-linked (GlcNAc...) asparagine glycans are attached at residues N24 and N31. A helical transmembrane segment spans residues 46 to 71 (PWKVLLILVLALFTLATTLSNAFVIA). Residues 72–85 (TVYRTRKLHTPANY) are Cytoplasmic-facing. The chain crosses the membrane as a helical span at residues 86-110 (LIASLAVTDLLVSILVMPISTMYTV). Topologically, residues 111-118 (TGRWTLGQ) are extracellular. Residues 119–144 (VVCDFWLSSDITCCTASILHLCVIAL) form a helical membrane-spanning segment. C121 and C198 are disulfide-bonded. Ergotamine is bound by residues D128 and T133. A DRY motif; important for ligand-induced conformation changes and signaling motif is present at residues 145–147 (DRY). Topologically, residues 145 to 164 (DRYWAITDAVEYSAKRTPKR) are cytoplasmic. A helical membrane pass occupies residues 165-183 (AAVMIALVWVFSISISLPP). At 184-204 (FFWRQAKAEEEVSDCRVNTDH) the chain is on the extracellular side. V200 provides a ligand contact to ergotamine. Residues 205-228 (MLYTVYSTVGAFYFPTLLLIALYG) form a helical membrane-spanning segment. Over 229 to 314 (RIYVEARSRI…AARERKATKT (86 aa)) the chain is Cytoplasmic. Positions 258–271 (DSPGSTSSVTSVNS) are enriched in polar residues. Residues 258–281 (DSPGSTSSVTSVNSRAPDVPSESG) are disordered. The helical transmembrane segment at 315 to 336 (LGIILGAFIVCWLPFFIISLVM) threads the bilayer. Residues 337–346 (PICKDACWFH) are Extracellular-facing. The chain crosses the membrane as a helical span at residues 347-369 (LAIFDFFTWLGYLNSLINPIIYT). Positions 364-368 (NPIIY) match the NPxxY motif; important for ligand-induced conformation changes and signaling motif. At 370–389 (MSNEDFKQAFHKLIRFKCTG) the chain is on the cytoplasmic side. C387 carries the S-palmitoyl cysteine lipid modification.

Belongs to the G-protein coupled receptor 1 family. In terms of assembly, homodimer. Heterodimer with HTR1D. Post-translationally, phosphorylated. Desensitization of the receptor may be mediated by its phosphorylation. Palmitoylated.

It localises to the cell membrane. G-protein coupled receptor for 5-hydroxytryptamine (serotonin). Also functions as a receptor for ergot alkaloid derivatives, various anxiolytic and antidepressant drugs and other psychoactive substances, such as lysergic acid diethylamide (LSD). Ligand binding causes a conformation change that triggers signaling via guanine nucleotide-binding proteins (G proteins) and modulates the activity of downstream effectors, such as adenylate cyclase. HTR1B is coupled to G(i)/G(o) G alpha proteins and mediates inhibitory neurotransmission by inhibiting adenylate cyclase activity. Arrestin family members inhibit signaling via G proteins and mediate activation of alternative signaling pathways. Regulates the release of 5-hydroxytryptamine, dopamine and acetylcholine in the brain, and thereby affects neural activity, nociceptive processing, pain perception, mood and behavior. Besides, plays a role in vasoconstriction of cerebral arteries. This is 5-hydroxytryptamine receptor 1B (HTR1B) from Felis catus (Cat).